We begin with the raw amino-acid sequence, 202 residues long: LexA repressor (202 aa).

Active-site for autocatalytic cleavage activity residues include Ser-123 and Lys-159.

Belongs to the peptidase S24 family. As to quaternary structure, homodimer.

It carries out the reaction Hydrolysis of Ala-|-Gly bond in repressor LexA.. Binds the consensus sequence 5'-TGTTC-N(4)-GAACA-3'; some genes have a tandem consensus sequence, at high concentrations their binding is cooperative. Binds to the promoters of a number of genes, including dinB, imuA, lexA, recA, recQ, splB and uvrA. Represses a number of genes involved in the response to DNA damage (SOS response). In the presence of single-stranded DNA, RecA interacts with LexA causing an autocatalytic cleavage which disrupts the DNA-binding part of LexA, leading to derepression of the SOS regulon and eventually DNA repair. In Verrucomicrobium spinosum (strain ATCC 43997 / DSM 4136 / JCM 18804 / IFAM 1439), this protein is LexA repressor.